Here is a 362-residue protein sequence, read N- to C-terminus: Cyclic di-GMP phosphodiesterase PdeL (362 aa).

Residues His18 to Tyr83 enclose the HTH luxR-type domain. A DNA-binding region (H-T-H motif) is located at residues Val42 to Lys61. An EAL domain is found at His106 to Ala360. Gln127 lines the substrate pocket. A Mg(2+)-binding site is contributed by Glu141. Substrate is bound by residues Val144–Arg145 and Asn200. Residues Asn200, Glu232, and Asp262 each coordinate Mg(2+). Substrate is bound by residues Asp262, Lys286, Glu319 to Glu322, and Tyr341.

In terms of assembly, is in a fast thermodynamic monomer-homodimer equilibrium. Dimerization is required for PDE activity. Dimerization affinity is increased about 100-fold upon substrate binding. It depends on Mg(2+) as a cofactor. Requires Mn(2+) as cofactor.

The enzyme catalyses 3',3'-c-di-GMP + H2O = 5'-phosphoguanylyl(3'-&gt;5')guanosine + H(+). With respect to regulation, strongly inhibited by Ca(2+). Its function is as follows. Acts both as an enzyme and as a c-di-GMP sensor to couple transcriptional activity to the c-di-GMP status of the cell. Phosphodiesterase (PDE) that catalyzes the hydrolysis of cyclic-di-GMP (c-di-GMP) to 5'-pGpG. Also acts as a transcription factor to control its own expression. This Escherichia coli (strain K12) protein is Cyclic di-GMP phosphodiesterase PdeL.